Consider the following 311-residue polypeptide: Mediator of RNA polymerase II transcription subunit 27-A (311 aa).

Belongs to the Mediator complex subunit 27 family. Component of the Mediator complex.

It is found in the nucleus. Functionally, component of the Mediator complex, a coactivator involved in the regulated transcription of nearly all RNA polymerase II-dependent genes. Mediator functions as a bridge to convey information from gene-specific regulatory proteins to the basal RNA polymerase II transcription machinery. Mediator is recruited to promoters by direct interactions with regulatory proteins and serves as a scaffold for the assembly of a functional preinitiation complex with RNA polymerase II and the general transcription factors. The chain is Mediator of RNA polymerase II transcription subunit 27-A (med27-a) from Xenopus laevis (African clawed frog).